The sequence spans 250 residues: MNQILLCSQILLLFFTVANCDGEHQLDSSVDLKSAVLKNVAPKNVATQAEIVKDDVALKSGKKGDYVMDIEVSDMPLDDYPINNSKSRKNSSTLPSPILTDKLNQGSNQIALKALKHRLVMEQNNNLFLRNHSVSLMNEIEARKTDIIQARQLNIDLELELESLKRKLSEMNVQNARKSTKSCKKRPSKDIAPPVNQLQEVIVKNTYRNKYLTLLTQLAQKINYEIANVNNPATDVPTGKSPSEGNPSTT.

Residues 1 to 18 (MNQILLCSQILLLFFTVA) form the signal peptide. Positions 79–100 (DYPINNSKSRKNSSTLPSPILT) are disordered. Polar residues predominate over residues 82 to 95 (INNSKSRKNSSTLP). N83, N90, and N131 each carry an N-linked (GlcNAc...) asparagine glycan. Disordered stretches follow at residues 172 to 191 (NVQNARKSTKSCKKRPSKDI) and 230 to 250 (NNPATDVPTGKSPSEGNPSTT). Positions 178–187 (KSTKSCKKRP) are enriched in basic residues. Positions 240-250 (KSPSEGNPSTT) are enriched in polar residues.

In terms of processing, proteolytically cleaved as it is secreted and in the recipient female. In terms of tissue distribution, main cells of the accessory glands of males.

The protein localises to the secreted. The protein resides in the extracellular space. Functionally, this protein is transferred from male to female's hemolymph during mating, affecting egglaying and behavior after mating. The chain is Accessory gland-specific peptide 26Aa (Acp26Aa) from Drosophila mauritiana (Fruit fly).